Here is an 83-residue protein sequence, read N- to C-terminus: Retinal cone rhodopsin-sensitive cGMP 3',5'-cyclic phosphodiesterase subunit gamma (83 aa).

The disordered stretch occupies residues 1–54 (MSDSPSLSPPAPSQGPTTPRKGPPKFKQRQTRQFKSKPPKKGVKGFGDDIPGME). Positions 22 to 43 (GPPKFKQRQTRQFKSKPPKKGV) are enriched in basic residues.

Belongs to the rod/cone cGMP-PDE gamma subunit family. As to quaternary structure, tetramer composed of two catalytic chains (alpha and beta), and two inhibitory chains (gamma).

The enzyme catalyses 3',5'-cyclic GMP + H2O = GMP + H(+). Its function is as follows. Participates in processes of transmission and amplification of the visual signal. cGMP-PDEs are the effector molecules in G-protein-mediated phototransduction in vertebrate rods and cones. In Mus musculus (Mouse), this protein is Retinal cone rhodopsin-sensitive cGMP 3',5'-cyclic phosphodiesterase subunit gamma (Pde6h).